A 1486-amino-acid chain; its full sequence is Chromosome partition protein MukB (1486 aa).

Gly34 to Ser41 lines the ATP pocket. Coiled-coil stretches lie at residues Leu326–Gln418, Leu444–Gln480, and Arg509–Val603. A flexible hinge region spans residues Pro666 to Arg783. 3 coiled-coil regions span residues Glu835 to Glu923, Glu977 to Ala1115, and Val1209 to Ser1266.

It belongs to the SMC family. MukB subfamily. In terms of assembly, homodimerization via its hinge domain. Binds to DNA via its C-terminal region. Interacts, and probably forms a ternary complex, with MukE and MukF via its C-terminal region. The complex formation is stimulated by calcium or magnesium. Interacts with tubulin-related protein FtsZ.

Its subcellular location is the cytoplasm. It localises to the nucleoid. Functionally, plays a central role in chromosome condensation, segregation and cell cycle progression. Functions as a homodimer, which is essential for chromosome partition. Involved in negative DNA supercoiling in vivo, and by this means organize and compact chromosomes. May achieve or facilitate chromosome segregation by condensation DNA from both sides of a centrally located replisome during cell division. This Escherichia coli O6:K15:H31 (strain 536 / UPEC) protein is Chromosome partition protein MukB.